The following is a 329-amino-acid chain: Acrosin (329 aa).

An N-terminal signal peptide occupies residues 1–17 (MLPTAVLLVLAVSVVAR). An N-linked (GlcNAc...) asparagine glycan is attached at N19. Cystine bridges form between C22-C152, C26-C160, C71-C87, C175-C244, C207-C223, and C234-C264. Residues 40–288 (IIGGQDAAHG…YLNWIASKIG (249 aa)) form the Peptidase S1 domain. Residues H86 and D140 each act as charge relay system in the active site. An N-linked (GlcNAc...) asparagine glycan is attached at N208. S238 functions as the Charge relay system in the catalytic mechanism.

The protein belongs to the peptidase S1 family. Heavy chain (catalytic) and a light chain linked by two disulfide bonds. Forms a heterodimer with SERPINA5.

It catalyses the reaction Preferential cleavage: Arg-|-Xaa, Lys-|-Xaa.. Inhibited by SERPINA5. Its function is as follows. Acrosin is the major protease of mammalian spermatozoa. It is a serine protease of trypsin-like cleavage specificity, it is synthesized in a zymogen form, proacrosin and stored in the acrosome. The protein is Acrosin (ACR) of Ovis aries (Sheep).